The sequence spans 134 residues: Nogalonic acid methyl ester cyclase (134 aa).

Residue Gln95 participates in nogalaviketone binding. Catalysis depends on Asp111, which acts as the Proton donor/acceptor.

Belongs to the polyketide cyclase DnrD family. In terms of assembly, homotetramer. Dimer of dimers.

It catalyses the reaction nogalaviketone = methyl nogalonate. It functions in the pathway antibiotic biosynthesis. Involved in the biosynthesis of the aromatic polyketide antibiotic nogalamycin. Catalyzes the formation of nogalaviketone from nogalonic acid methyl ester (NAME), the last ring-closure step in the biosynthesis of nogalamycin. The chain is Nogalonic acid methyl ester cyclase from Streptomyces nogalater.